Consider the following 135-residue polypeptide: MATPKQAAKKASKKRSGGRSAKAGLIFPVGRVGSLLRRGQYARRIGASGAVYMAAVLEYLTAELLELSVKAASQQAKKPKRLTPRTVTLAVRHDDDLGMLLKDVTLSRGGVMPSLNKALAKKHKSSKKARATPSA.

This sequence belongs to the histone H2A family. As to quaternary structure, the nucleosome is a histone octamer containing two molecules each of H2A, H2B, H3 and H4 assembled in one H3-H4 heterotetramer and two H2A-H2B heterodimers. The octamer wraps approximately 147 bp of DNA.

The protein resides in the nucleus. Its subcellular location is the chromosome. In terms of biological role, core component of nucleosome. Nucleosomes wrap and compact DNA into chromatin, limiting DNA accessibility to the cellular machineries which require DNA as a template. Histones thereby play a central role in transcription regulation, DNA repair, DNA replication and chromosomal stability. DNA accessibility is regulated via a complex set of post-translational modifications of histones, also called histone code, and nucleosome remodeling. The sequence is that of Histone H2A from Trypanosoma cruzi.